Here is a 1212-residue protein sequence, read N- to C-terminus: Periplasmic/secreted acid trehalase ATH1 (1212 aa).

Topologically, residues 1-82 (MGFKDKILFW…STRVKIRRQN (82 aa)) are cytoplasmic. The helical transmembrane segment at 83–103 (ILNTTLILGMLIALVIWTAIL) threads the bilayer. Residues 104-1212 (STNSYFSSSL…ATIREIVLQE (1109 aa)) are Periplasmic-facing. 7 N-linked (GlcNAc...) asparagine glycosylation sites follow: asparagine 243, asparagine 275, asparagine 296, asparagine 362, asparagine 414, asparagine 428, and asparagine 521. 546–547 (WD) provides a ligand contact to substrate. Asparagine 572, asparagine 601, asparagine 661, and asparagine 671 each carry an N-linked (GlcNAc...) asparagine glycan. The active-site Proton donor is glutamate 677. Residues asparagine 729 and asparagine 738 are each glycosylated (N-linked (GlcNAc...) asparagine). 744–745 (KQ) contacts substrate. Asparagine 912, asparagine 938, asparagine 993, asparagine 1011, asparagine 1033, asparagine 1052, asparagine 1070, asparagine 1097, and asparagine 1165 each carry an N-linked (GlcNAc...) asparagine glycan.

Belongs to the glycosyl hydrolase 65 family. As to quaternary structure, homodimer.

Its subcellular location is the secreted. It localises to the periplasm. It is found in the membrane. It catalyses the reaction alpha,alpha-trehalose + H2O = alpha-D-glucose + beta-D-glucose. Periplasmic/secreted acid trehalase that catalyzes hydrolysis of the disaccharide trehalose and required for growth on trehalose as carbon source. Growth on trehalose is not restricted to respiration. This is Periplasmic/secreted acid trehalase ATH1 from Candida glabrata (Yeast).